Consider the following 250-residue polypeptide: uncharacterized protein (250 aa).

A coiled-coil region spans residues 165-208 (HLNLETANTKATEYQKNYQEELKQRQELRQKLLQERTQKMLEAL). A compositionally biased stretch (basic and acidic residues) spans 201 to 233 (TQKMLEALHQEETPEQDARDTAKKKTDQEEHTM). The segment at 201–250 (TQKMLEALHQEETPEQDARDTAKKKTDQEEHTMRKANAPKTKASGEAPTP) is disordered.

This is an uncharacterized protein from Treponema pallidum (strain Nichols).